A 1058-amino-acid polypeptide reads, in one-letter code: Translation initiation factor IF-2 (1058 aa).

Over residues 1 to 12 (MNDTKTPGDKTL) the composition is skewed to basic and acidic residues. The interval 1 to 468 (MNDTKTPGDK…MTGHRGMQES (468 aa)) is disordered. The segment covering 54–81 (APGEAGAPSGTPAAAPAATPAPAAAAPR) has biased composition (low complexity). The span at 82–95 (PATPAPAAPRPAAP) shows a compositional bias: pro residues. Residues 96–108 (ATPAQPAAEAKAP) are compositionally biased toward low complexity. A compositionally biased stretch (pro residues) spans 109–119 (APAPTPAPAAP). 2 stretches are compositionally biased toward low complexity: residues 120-156 (AAPV…VEVP) and 164-228 (EPVA…QRPG). The span at 244-271 (RSGGPGSDRRGGPGGQNRPGQNRQGGSG) shows a compositional bias: gly residues. Residues 292–364 (ARVREVEERR…ARKRFGEETG (73 aa)) show a composition bias toward basic and acidic residues. Over residues 368–396 (GASAPSTSTARPLTPRPAGTTTTTGAPAA) the composition is skewed to low complexity. Over residues 452 to 461 (FRRRTQRMTG) the composition is skewed to basic residues. A tr-type G domain is found at 555–725 (PRPPVVTIMG…SLQSEVLDLK (171 aa)). Residues 564–571 (GHVDHGKT) form a G1 region. Residue 564-571 (GHVDHGKT) participates in GTP binding. Positions 589–593 (GITQH) are G2. The tract at residues 611–614 (DTPG) is G3. Residues 611 to 615 (DTPGH) and 665 to 668 (NKID) each bind GTP. Positions 665–668 (NKID) are G4. A G5 region spans residues 701–703 (SAT).

The protein belongs to the TRAFAC class translation factor GTPase superfamily. Classic translation factor GTPase family. IF-2 subfamily.

It localises to the cytoplasm. One of the essential components for the initiation of protein synthesis. Protects formylmethionyl-tRNA from spontaneous hydrolysis and promotes its binding to the 30S ribosomal subunits. Also involved in the hydrolysis of GTP during the formation of the 70S ribosomal complex. The chain is Translation initiation factor IF-2 from Azorhizobium caulinodans (strain ATCC 43989 / DSM 5975 / JCM 20966 / LMG 6465 / NBRC 14845 / NCIMB 13405 / ORS 571).